The sequence spans 428 residues: Gamma-glutamyl phosphate reductase (428 aa).

The protein belongs to the gamma-glutamyl phosphate reductase family.

The protein localises to the cytoplasm. It catalyses the reaction L-glutamate 5-semialdehyde + phosphate + NADP(+) = L-glutamyl 5-phosphate + NADPH + H(+). The protein operates within amino-acid biosynthesis; L-proline biosynthesis; L-glutamate 5-semialdehyde from L-glutamate: step 2/2. Catalyzes the NADPH-dependent reduction of L-glutamate 5-phosphate into L-glutamate 5-semialdehyde and phosphate. The product spontaneously undergoes cyclization to form 1-pyrroline-5-carboxylate. The sequence is that of Gamma-glutamyl phosphate reductase from Zymomonas mobilis subsp. mobilis (strain ATCC 31821 / ZM4 / CP4).